We begin with the raw amino-acid sequence, 443 residues long: Signal recognition particle 54 kDa protein (443 aa).

GTP is bound by residues 104–111 (GLQGSGKT), 184–188 (DTAGR), and 242–245 (TKLD).

Belongs to the GTP-binding SRP family. SRP54 subfamily. In terms of assembly, part of the signal recognition particle protein translocation system, which is composed of SRP and FtsY. Archaeal SRP consists of a 7S RNA molecule of 300 nucleotides and two protein subunits: SRP54 and SRP19.

Its subcellular location is the cytoplasm. It carries out the reaction GTP + H2O = GDP + phosphate + H(+). Involved in targeting and insertion of nascent membrane proteins into the cytoplasmic membrane. Binds to the hydrophobic signal sequence of the ribosome-nascent chain (RNC) as it emerges from the ribosomes. The SRP-RNC complex is then targeted to the cytoplasmic membrane where it interacts with the SRP receptor FtsY. In Methanosarcina mazei (strain ATCC BAA-159 / DSM 3647 / Goe1 / Go1 / JCM 11833 / OCM 88) (Methanosarcina frisia), this protein is Signal recognition particle 54 kDa protein.